A 388-amino-acid chain; its full sequence is Succinate--CoA ligase [ADP-forming] subunit beta (388 aa).

Residues 9–244 (KEILRKYGVT…LDEEDPAEIE (236 aa)) form the ATP-grasp domain. ATP contacts are provided by residues Lys-46, 53-55 (GRG), Glu-99, Ala-102, and Glu-107. Positions 199 and 213 each coordinate Mg(2+). Substrate-binding positions include Asn-264 and 321–323 (GIM).

It belongs to the succinate/malate CoA ligase beta subunit family. In terms of assembly, heterotetramer of two alpha and two beta subunits. The cofactor is Mg(2+).

The enzyme catalyses succinate + ATP + CoA = succinyl-CoA + ADP + phosphate. It catalyses the reaction GTP + succinate + CoA = succinyl-CoA + GDP + phosphate. Its pathway is carbohydrate metabolism; tricarboxylic acid cycle; succinate from succinyl-CoA (ligase route): step 1/1. Its function is as follows. Succinyl-CoA synthetase functions in the citric acid cycle (TCA), coupling the hydrolysis of succinyl-CoA to the synthesis of either ATP or GTP and thus represents the only step of substrate-level phosphorylation in the TCA. The beta subunit provides nucleotide specificity of the enzyme and binds the substrate succinate, while the binding sites for coenzyme A and phosphate are found in the alpha subunit. The polypeptide is Succinate--CoA ligase [ADP-forming] subunit beta (Janthinobacterium sp. (strain Marseille) (Minibacterium massiliensis)).